A 129-amino-acid polypeptide reads, in one-letter code: Protein Turandot A1 (129 aa).

The signal sequence occupies residues 1-21 (MNSSTALMCFALLLISPLCMG). N-linked (GlcNAc...) asparagine glycosylation is present at asparagine 49.

This sequence belongs to the Turandot family.

Its subcellular location is the secreted. Its function is as follows. A humoral factor that plays a role in stress tolerance; gives increased resistance to the lethal effects of bacterial challenge and stress. Regulated by the JAK/STAT pathway and NF-KB-like Relish pathway in the fat body, upd3 in the hemocytes and Mekk1 in response to septic injury and consequent immune response. The chain is Protein Turandot A1 (TotA1) from Drosophila simulans (Fruit fly).